The sequence spans 322 residues: MDHHAMYRTAEFNKTTVRLLAEFIEKTGQNATIVNMDSFLEFFAYLNPTAPIPTVPEIEKQLLLKSPIRCIVCGMETESDSAVTLSIDNASIILTATVIGYCRDPSDAVNQIRKESLRACTKHFNSIFHVIFEGLQIENTYCAHHAKYSLANRWCKVYTMIRSSLGEQFTKFDVRNFKSILQSFLDTFGEIDDDKKDKESSHFDECFEEMDSENVEIKMESPQEEAAEKSKFSENLVEVKLEPIETHELDKTISDFSSSDIIDSSQKLQQNGFPEKVEQMDKYSNKLKDEASDKKYEKPGKKDYVEEEGYWAPITDSEDDEA.

The segment at 264-322 is disordered; sequence SSQKLQQNGFPEKVEQMDKYSNKLKDEASDKKYEKPGKKDYVEEEGYWAPITDSEDDEA. Residues 275–304 show a composition bias toward basic and acidic residues; it reads EKVEQMDKYSNKLKDEASDKKYEKPGKKDY.

Widely expressed throughout embryonic development. Expressed in the six multipotent ventral ectodermal blast cells, P3.p-P8.p, which generate the vulva and in their descendants throughout vulval development.

It is found in the nucleus. Its function is as follows. Required for translation, stability and/or localization of lin-15a. The sequence is that of Protein lin-56 (lin-56) from Caenorhabditis elegans.